Reading from the N-terminus, the 616-residue chain is Protein cereblon (616 aa).

3 disordered regions span residues 1–39 (MDEE…DDSV), 63–137 (FGPS…AMPR), and 182–220 (SQER…DIDM). Residues 11–32 (AQEQEVAGSAGEAAAGPSGAEV) show a composition bias toward low complexity. A compositionally biased stretch (acidic residues) spans 96–107 (SEEDIVLDDGTE). A compositionally biased stretch (basic and acidic residues) spans 183 to 192 (QERRRSRNSD). The segment covering 194 to 203 (VSPEAEDDEL) has biased composition (acidic residues). Pro residues predominate over residues 206-215 (HPPPPPPRPP). The Lon N-terminal domain occupies 257 to 482 (HMLIFLHQYI…LIGGILKEET (226 aa)). The CULT domain occupies 481–590 (ETLFYCRYCN…LAGSSVRIGK (110 aa)). Residues Cys486, Cys489, Cys555, and Cys558 each contribute to the Zn(2+) site.

Belongs to the CRBN family. Likely a component of a DCX (DDB1-CUL4-X-box) protein ligase complex. May interact with pic/DDB1. Ubiquitinated.

The protein localises to the nucleus. Its pathway is protein modification; protein ubiquitination. Functionally, substrate recognition component of a DCX (DDB1-CUL4-X-box) E3 protein ligase complex that mediates the ubiquitination and subsequent proteasomal degradation of target proteins. Has an essential role in mediating growth by negatively regulating insulin signaling. It also has a role in maintaining presynaptic function in the neuromuscular junction synapses of third-instar larvae. The polypeptide is Protein cereblon (Drosophila persimilis (Fruit fly)).